The following is a 335-amino-acid chain: MAKRYLLDFEKPLVELEKQIEQIKELARDSEVDVSQQLLQLETLAARRREEIFKSLTPAQKIQVARHPQRPSTLDFVQMFCDDWIELHGDRNGGDDMALVGGIGSINNRPVLILGHQKGRDTKENVVRNFGMAKPGGYRKALRLMQHADRFSLPILTFIDTPGAYAGLTAEEQGQGEAIARNLREMFGLKVPIVATVIGEGGSGGALGIGVADRLLMFEHSVYTVASPEACASILWRDAAKAPEAASALKITGKDLLKLGIIDEVLPEPSGGNNWAPLDAGNTLKEAIEKHLNALLQMTKDELIEERYKKFRVLGKFIEANNIEEIYSEIPQKTE.

A CoA carboxyltransferase C-terminal domain is found at 40-294; sequence QLETLAARRR…KEAIEKHLNA (255 aa).

It belongs to the AccA family. As to quaternary structure, acetyl-CoA carboxylase is a heterohexamer composed of biotin carboxyl carrier protein (AccB), biotin carboxylase (AccC) and two subunits each of ACCase subunit alpha (AccA) and ACCase subunit beta (AccD).

The protein localises to the cytoplasm. It catalyses the reaction N(6)-carboxybiotinyl-L-lysyl-[protein] + acetyl-CoA = N(6)-biotinyl-L-lysyl-[protein] + malonyl-CoA. It functions in the pathway lipid metabolism; malonyl-CoA biosynthesis; malonyl-CoA from acetyl-CoA: step 1/1. Its function is as follows. Component of the acetyl coenzyme A carboxylase (ACC) complex. First, biotin carboxylase catalyzes the carboxylation of biotin on its carrier protein (BCCP) and then the CO(2) group is transferred by the carboxyltransferase to acetyl-CoA to form malonyl-CoA. The chain is Acetyl-coenzyme A carboxylase carboxyl transferase subunit alpha from Prochlorococcus marinus (strain MIT 9215).